We begin with the raw amino-acid sequence, 1035 residues long: Eukaryotic translation initiation factor 3 subunit A (1035 aa).

The stretch at 92–121 (LKKFIELAEKKVTEAQAKADEIQSSLESAA) forms a coiled coil. One can recognise a PCI domain in the interval 339 to 523 (MTKAASFVLL…GVLTFDTDVF (185 aa)). Positions 606 to 910 (ERRVIIEKKK…LRAKRAGLSE (305 aa)) form a coiled coil. 2 stretches are compositionally biased toward basic and acidic residues: residues 619-632 (TDAL…EETR) and 809-901 (KAAE…EARL). Disordered stretches follow at residues 619 to 649 (TDAL…QRLA) and 809 to 1035 (KAAE…QQNQ). Low complexity-rich tracts occupy residues 943 to 953 (KEAAGGAAPEA) and 988 to 1004 (PPSQ…QTPP).

Belongs to the eIF-3 subunit A family. In terms of assembly, component of the eukaryotic translation initiation factor 3 (eIF-3) complex.

It is found in the cytoplasm. Its function is as follows. RNA-binding component of the eukaryotic translation initiation factor 3 (eIF-3) complex, which is involved in protein synthesis of a specialized repertoire of mRNAs and, together with other initiation factors, stimulates binding of mRNA and methionyl-tRNAi to the 40S ribosome. The eIF-3 complex specifically targets and initiates translation of a subset of mRNAs involved in cell proliferation. The sequence is that of Eukaryotic translation initiation factor 3 subunit A (tif32) from Emericella nidulans (strain FGSC A4 / ATCC 38163 / CBS 112.46 / NRRL 194 / M139) (Aspergillus nidulans).